The sequence spans 316 residues: Pantothenate kinase (316 aa).

95–102 (GSVAVGKS) contacts ATP.

Belongs to the prokaryotic pantothenate kinase family.

It localises to the cytoplasm. The catalysed reaction is (R)-pantothenate + ATP = (R)-4'-phosphopantothenate + ADP + H(+). It participates in cofactor biosynthesis; coenzyme A biosynthesis; CoA from (R)-pantothenate: step 1/5. The polypeptide is Pantothenate kinase (Shewanella baltica (strain OS195)).